Consider the following 301-residue polypeptide: GTPase Era (301 aa).

Residues 8-174 (KSGFVALVGR…LKTLKDYLPE (167 aa)) enclose the Era-type G domain. Positions 16–23 (GRPNVGKS) are G1. 16–23 (GRPNVGKS) is a GTP binding site. Positions 42–46 (QTTRN) are G2. The tract at residues 63-66 (DTPG) is G3. Residues 63 to 67 (DTPGI) and 124 to 127 (NKID) contribute to the GTP site. Residues 124-127 (NKID) are G4. The G5 stretch occupies residues 153 to 155 (ISA). The KH type-2 domain occupies 197–282 (IREQILRLTD…NLKLWVKVRR (86 aa)).

This sequence belongs to the TRAFAC class TrmE-Era-EngA-EngB-Septin-like GTPase superfamily. Era GTPase family. Monomer.

The protein resides in the cytoplasm. It localises to the cell membrane. Functionally, an essential GTPase that binds both GDP and GTP, with rapid nucleotide exchange. Plays a role in 16S rRNA processing and 30S ribosomal subunit biogenesis and possibly also in cell cycle regulation and energy metabolism. The chain is GTPase Era from Lactobacillus delbrueckii subsp. bulgaricus (strain ATCC 11842 / DSM 20081 / BCRC 10696 / JCM 1002 / NBRC 13953 / NCIMB 11778 / NCTC 12712 / WDCM 00102 / Lb 14).